We begin with the raw amino-acid sequence, 1943 residues long: MASTSSSQPEKNRSHVPLCRLGTEPVSRTGAAEEPSGQRECYYYAPATSPHHHHHHHHQHHHHHRLKQHHRHHHHHHRLQHHHHHHQQQHNHQNQQMQHHWPSRLGPIGPWLGAMTAYRLLTISLLIGILCPHHVQGADPKFDPTTRMRLVLVPADAQVNSVIYRLRATDEEFDYPLTFEFVGDASASTVKVESLPCTKYNSVCQANIVLQRRLEPGRYYDFQVSVKDTKGGMTTQLCSITATNFTTPHDLIFPHKPGIIMIPEDAKRGTELDYVIARKNPLFQKPVYLELWGSPLFAIRQKIVSSETTEGTVFLLGPLDFEKQAMYHLTILANDAYAEPGQDSRNIAGMEIVVIVQDVQDQPPVFTSAPPVTKLPPGILPGDKILQVHAEDGDKGNPREVRYGLVSENNPFTSFFDINETSGEIFLMRPLEDIAFITHVGDPVLLTVIAEEVKVGRDEPPALASTVQLAFFLPDRTNSPPYFENDHYVSRVDENAPQGTALTFVDPYVPRVYDDDTGKNGVFSLTLLNNNGTFEISPNVAERSAGFLIRVRDNSMLDYEQQQSVQFQILAQELGPATNLSALVNVTVYINDVNDNAPVFEQPAYSVELPENMTAGTKVVQVLATDPDSGLGGKVRYTAILGYLNTSLNLDAETGLITVSTNKHGFDREVMPEYHLYVEARDMDGEGNRAQVPLIIKLIDVNDETPIFDKDLYEFILTHDLMGFTTTAVIHAEDKDATAPNNEVRYEIINGNYDNQFVLDKVTGELTVREKIHLRSKKNAKTRRRRQAGSDDEDTDIFILTARAYDLGVPVRFSTTTIRVYPPESRKRSVKFVVPGHNPDKAKTEETLSALSGGKVYIHNIRPLSPDEPGAKDIPAGNPGIKERSVVTATVIYDSSSVVDISEIQQRLSHHNNSYAIMPQDTSSTDTQYKAENKVLFWLLILLATLVALTILILLLCCICSWCPLYGAATKRIVNISRTEDDVHLVHREMANGKQTKSVQVAEWMGRRDAWSAEKPPDTRTKPTRWEFHDGREQLDEDVGRGQDIGEGDRRHIQSAEEQQRRVRIKHNRTAKDDLHLNFHNSRTNLINDRDVYMEDVIENRDLAGDREHITRTRVNRQEYARRKQYDSEVRHIDDDSMRRHEIDRGSDIDFNTAHNSLKSKRELFIKDGNVEILQLMTRDKTRDGLNLDDDNIYVNVPLKPAGNLSHPQLLMVDNTGKEILMRRFIEEQPDGKQIIREHYQIVPGATYIQSMPNEVQQGSTLKGDTFPLGKSGPNSIVYSQLEPEVKVIHTQPVQAGEGVSLDQQMQPAVSNQSLTHELEHSLKQQNALLRQILMEKEKLENAYTQHEVALETQSLPGQSMAIGTQTDCDAGTQTEGFDGVLDPEISLAKPSRRRARSENDESMSEDGYEYVRFNPPNSPEGVYWIKRRRTKKRPRQPRKRIVMVEEVKRKIRTPIKEEEEVQERKKRVPPKKPLRETKTSILRKQLSDESRKDQSRNGESQTGNRHRSESDSHNRDMFMEITDSMDELASPGSHSIRKIQVEKYYKHSDGDFDEDDTEYSIDSDGDEIVIRTNYPSRAQENERYRRQERTYAEPENPVDRKRPARKSSPTDSQPEAMPRLSRRDSSKRGSRKQTSSEPPHNRVSISKYESTVTENGRKLMSTSTEIVGSKRSLTDRSYQSETELAGLEHEERNVPKYMEWYYNKKKSSVSGRTSTESSKSQPSSKKKVGAAEKRVSKTRITAQPKDVEEYDETGGRYKPEPAPRKSPPKGSRLLKEDRALNKQHKPKIETDTNHPLLQHSEHRFERENALEVPAAPTKLPHYMYPETPPHAAAGGKESKSGRESKTSKEAKPKPSPIRENEVKVSNSKIYVEHRGTGHPTQKQLNASTLEDDHDSGIAMNSLLNSLGRRNPIAEKKSVFSIAYDDVSRVKKINSGGESPQYS.

The disordered stretch occupies residues 1–102 (MASTSSSQPE…QNQQMQHHWP (102 aa)). The Extracellular segment spans residues 1 to 934 (MASTSSSQPE…TDTQYKAENK (934 aa)). Residue N12 is glycosylated (N-linked (GlcNAc...) asparagine). A compositionally biased stretch (basic residues) spans 50–89 (PHHHHHHHHQHHHHHRLKQHHRHHHHHHRLQHHHHHHQQQ). A compositionally biased stretch (low complexity) spans 90–100 (HNHQNQQMQHH). Cadherin domains follow at residues 238 to 366 (CSIT…PPVF), 367 to 483 (TSAP…PPYF), 484 to 600 (ENDH…APVF), 601 to 708 (EQPA…TPIF), and 709 to 832 (DKDL…SVKF). N244, N419, N531, N579, N585, N612, and N645 each carry an N-linked (GlcNAc...) asparagine glycan. The N-linked (GlcNAc...) asparagine glycan is linked to N912. Residues 935 to 955 (VLFWLLILLATLVALTILILL) traverse the membrane as a helical segment. Residues 956-1943 (LCCICSWCPL…NSGGESPQYS (988 aa)) are Cytoplasmic-facing. Disordered regions lie at residues 1038-1058 (DVGR…SAEE), 1390-1442 (KPSR…RKRI), 1458-1516 (EEEE…SHNR), 1546-1695 (YKHS…ERNV), and 1707-1895 (KSSV…DDHD). The span at 1047 to 1058 (EGDRRHIQSAEE) shows a compositional bias: basic and acidic residues. Positions 1426–1442 (IKRRRTKKRPRQPRKRI) are enriched in basic residues. Basic and acidic residues-rich tracts occupy residues 1486-1497 (QLSDESRKDQSR) and 1507-1516 (HRSESDSHNR). Positions 1552-1568 (DFDEDDTEYSIDSDGDE) are enriched in acidic residues. The span at 1580-1602 (QENERYRRQERTYAEPENPVDRK) shows a compositional bias: basic and acidic residues. The segment covering 1633 to 1667 (KQTSSEPPHNRVSISKYESTVTENGRKLMSTSTEI) has biased composition (polar residues). The span at 1709–1724 (SVSGRTSTESSKSQPS) shows a compositional bias: low complexity. Basic and acidic residues-rich tracts occupy residues 1754–1764 (TGGRYKPEPAP), 1774–1793 (LLKE…ETDT), 1800–1810 (HSEHRFERENA), and 1837–1863 (KESK…ENEV). Residues 1879 to 1889 (HPTQKQLNAST) show a composition bias toward polar residues.

As cell intercalation proceeds, a row of stigmatophore cells surrounding the spiracular chamber show expression of Cad86C. Expression is regulated by the Abd-B cascade, requiring sal. Expressed in a broad region of the morphogenetic furrow and in clusters of cells posterior to the morphogenetic furrow. Weakly expressed in the epithelium of wing imaginal disks. In eye imaginal disk cells within the morphogenetic furrow, expression is localized to the apical region.

It localises to the cell membrane. Cadherins are calcium-dependent cell adhesion proteins. They preferentially interact with themselves in a homophilic manner in connecting cells. The protein is Cadherin-86C (Cad86C) of Drosophila melanogaster (Fruit fly).